Reading from the N-terminus, the 166-residue chain is Crossover junction endodeoxyribonuclease RuvC (166 aa).

Catalysis depends on residues Asp-11, Glu-70, and Asp-142. Mg(2+) contacts are provided by Asp-11, Glu-70, and Asp-142.

The protein belongs to the RuvC family. Homodimer which binds Holliday junction (HJ) DNA. The HJ becomes 2-fold symmetrical on binding to RuvC with unstacked arms; it has a different conformation from HJ DNA in complex with RuvA. In the full resolvosome a probable DNA-RuvA(4)-RuvB(12)-RuvC(2) complex forms which resolves the HJ. Mg(2+) is required as a cofactor.

Its subcellular location is the cytoplasm. The enzyme catalyses Endonucleolytic cleavage at a junction such as a reciprocal single-stranded crossover between two homologous DNA duplexes (Holliday junction).. Its function is as follows. The RuvA-RuvB-RuvC complex processes Holliday junction (HJ) DNA during genetic recombination and DNA repair. Endonuclease that resolves HJ intermediates. Cleaves cruciform DNA by making single-stranded nicks across the HJ at symmetrical positions within the homologous arms, yielding a 5'-phosphate and a 3'-hydroxyl group; requires a central core of homology in the junction. The consensus cleavage sequence is 5'-(A/T)TT(C/G)-3'. Cleavage occurs on the 3'-side of the TT dinucleotide at the point of strand exchange. HJ branch migration catalyzed by RuvA-RuvB allows RuvC to scan DNA until it finds its consensus sequence, where it cleaves and resolves the cruciform DNA. The sequence is that of Crossover junction endodeoxyribonuclease RuvC from Nitratidesulfovibrio vulgaris (strain ATCC 29579 / DSM 644 / CCUG 34227 / NCIMB 8303 / VKM B-1760 / Hildenborough) (Desulfovibrio vulgaris).